A 198-amino-acid polypeptide reads, in one-letter code: Large ribosomal subunit protein bL25 (198 aa).

Belongs to the bacterial ribosomal protein bL25 family. CTC subfamily. As to quaternary structure, part of the 50S ribosomal subunit; part of the 5S rRNA/L5/L18/L25 subcomplex. Contacts the 5S rRNA. Binds to the 5S rRNA independently of L5 and L18.

This is one of the proteins that binds to the 5S RNA in the ribosome where it forms part of the central protuberance. This is Large ribosomal subunit protein bL25 from Chlorobium phaeobacteroides (strain DSM 266 / SMG 266 / 2430).